Consider the following 414-residue polypeptide: Putative F-box/kelch-repeat protein At1g20940 (414 aa).

One can recognise an F-box domain in the interval 13 to 65 (SSIINDLPLDLLDEILFRLEPKSMAMMRCTNNSIKSYLSDPRFGPEYPSWVRP). Kelch repeat units lie at residues 281 to 328 (LTLI…MYDG) and 331 to 378 (LVVR…KLTP).

As to quaternary structure, interacts with DEK3.

It functions in the pathway protein modification; protein ubiquitination. Its function is as follows. Probable component of an E3 ubiquitin ligase complex. The protein is Putative F-box/kelch-repeat protein At1g20940 of Arabidopsis thaliana (Mouse-ear cress).